The following is a 160-amino-acid chain: Cytosolic iron-sulfur assembly component 2A (160 aa).

Zn(2+)-binding residues include histidine 89, histidine 123, glutamate 150, and glutamate 153.

It belongs to the MIP18 family. As to quaternary structure, monomer and homodimer. Component of the CIA complex. Interacts with CIAO1. Interacts with IREB2. Interacts with APAF1. Substantially enriched in macrophages.

The protein localises to the cytoplasm. Functionally, component of the cytosolic iron-sulfur protein assembly (CIA) complex, a multiprotein complex that mediates the incorporation of iron-sulfur cluster into extramitochondrial Fe/S proteins. As a CIA complex component and in collaboration with CIAO1 specifically matures ACO1 and stabilizes IREB2, connecting cytosolic iron-sulfur protein maturation with cellular iron regulation. May play a role in chromosome segregation through establishment of sister chromatid cohesion. May induce apoptosis in collaboration with APAF1. In Homo sapiens (Human), this protein is Cytosolic iron-sulfur assembly component 2A.